The sequence spans 137 residues: Ribosome-binding factor A (137 aa).

Belongs to the RbfA family. Monomer. Binds 30S ribosomal subunits, but not 50S ribosomal subunits or 70S ribosomes.

It is found in the cytoplasm. In terms of biological role, one of several proteins that assist in the late maturation steps of the functional core of the 30S ribosomal subunit. Associates with free 30S ribosomal subunits (but not with 30S subunits that are part of 70S ribosomes or polysomes). Required for efficient processing of 16S rRNA. May interact with the 5'-terminal helix region of 16S rRNA. The chain is Ribosome-binding factor A from Shewanella amazonensis (strain ATCC BAA-1098 / SB2B).